Here is a 185-residue protein sequence, read N- to C-terminus: MIKSVIAGAVAMAVVSFGVNNAAPTIPQGQGKVTFNGTVVDAPCSISQKSADQSIDFGQLSKSFLEAGGVSKPMDLDIELVNCDITAFKGGNGAKKGTVKLAFTGPIVNGHSDELDTNGGTGTAIVVQGAGKNVVFDGSEGDANTLKDGENVLHYTAVVKKSSAVGAAVTEGAFSAVANFNLTYQ.

An N-terminal signal peptide occupies residues 1–22; sequence MIKSVIAGAVAMAVVSFGVNNA. The cysteines at positions 44 and 83 are disulfide-linked.

Belongs to the fimbrial protein family.

Its subcellular location is the secreted. It is found in the fimbrium. Its function is as follows. Polymerizes to form the thick (6.8 nm in diameter) rod of the pilus (also called fimbria). The rod is a right-handed helical cylinder with 3.28 PapA subunits per turn. Pili are polar filaments radiating from the surface of the bacterium to a length of 0.5-1.5 micrometers and numbering 100-300 per cell, and enable bacteria to colonize the epithelium of specific host organs. The chain is Pap fimbrial major pilin protein (papA) from Escherichia coli.